The primary structure comprises 250 residues: Probable dihydroorotate dehydrogenase B (NAD(+)), electron transfer subunit (250 aa).

In terms of domain architecture, FAD-binding FR-type spans 1-89 (MINLKIEENV…RGPYGNGFDV (89 aa)). Residues C200, C205, C208, and C216 each contribute to the [2Fe-2S] cluster site.

This sequence belongs to the PyrK family. As to quaternary structure, heterotetramer of 2 PyrK and 2 PyrD type B subunits. It depends on [2Fe-2S] cluster as a cofactor. The cofactor is FAD.

The protein operates within pyrimidine metabolism; UMP biosynthesis via de novo pathway; orotate from (S)-dihydroorotate (NAD(+) route): step 1/1. Functionally, responsible for channeling the electrons from the oxidation of dihydroorotate from the FMN redox center in the PyrD type B subunit to the ultimate electron acceptor NAD(+). This is Probable dihydroorotate dehydrogenase B (NAD(+)), electron transfer subunit from Thermoplasma volcanium (strain ATCC 51530 / DSM 4299 / JCM 9571 / NBRC 15438 / GSS1).